The primary structure comprises 324 residues: Glyoxylate/hydroxypyruvate reductase B (324 aa).

Residues Arg-237 and Glu-266 contribute to the active site. His-285 serves as the catalytic Proton donor.

This sequence belongs to the D-isomer specific 2-hydroxyacid dehydrogenase family. GhrB subfamily. As to quaternary structure, homodimer.

It localises to the cytoplasm. It catalyses the reaction glycolate + NADP(+) = glyoxylate + NADPH + H(+). It carries out the reaction (R)-glycerate + NAD(+) = 3-hydroxypyruvate + NADH + H(+). The enzyme catalyses (R)-glycerate + NADP(+) = 3-hydroxypyruvate + NADPH + H(+). Its function is as follows. Catalyzes the NADPH-dependent reduction of glyoxylate and hydroxypyruvate into glycolate and glycerate, respectively. The polypeptide is Glyoxylate/hydroxypyruvate reductase B (Escherichia fergusonii (strain ATCC 35469 / DSM 13698 / CCUG 18766 / IAM 14443 / JCM 21226 / LMG 7866 / NBRC 102419 / NCTC 12128 / CDC 0568-73)).